The following is a 76-amino-acid chain: Conotoxin Lt6.1 (76 aa).

An N-terminal signal peptide occupies residues 1 to 22 (MKLTCVLIIAVLFLMDNQLITA). Residues 23 to 48 (DYPRDEQVYRAVRLRDAMQKSKGSGS) constitute a propeptide that is removed on maturation. Intrachain disulfides connect cysteine 49/cysteine 62, cysteine 56/cysteine 67, and cysteine 61/cysteine 75.

It belongs to the conotoxin O1 superfamily. As to expression, expressed by the venom duct.

The protein localises to the secreted. The chain is Conotoxin Lt6.1 from Conus litteratus (Lettered cone).